The chain runs to 350 residues: GTPase Obg (350 aa).

The Obg domain occupies 1 to 159 (MKLVDEAEIL…RLLKLELKLL (159 aa)). In terms of domain architecture, OBG-type G spans 160 to 337 (ADVGLLGFPN…IMKDVMAFFD (178 aa)). GTP-binding positions include 166–173 (GFPNAGKS), 191–195 (FTTLY), 213–216 (DVPG), 287–290 (NKAD), and 318–320 (SAL). Residues S173 and T193 each coordinate Mg(2+).

Belongs to the TRAFAC class OBG-HflX-like GTPase superfamily. OBG GTPase family. Monomer. Mg(2+) serves as cofactor.

It localises to the cytoplasm. Its function is as follows. An essential GTPase which binds GTP, GDP and possibly (p)ppGpp with moderate affinity, with high nucleotide exchange rates and a fairly low GTP hydrolysis rate. Plays a role in control of the cell cycle, stress response, ribosome biogenesis and in those bacteria that undergo differentiation, in morphogenesis control. This Xanthomonas campestris pv. campestris (strain 8004) protein is GTPase Obg.